The sequence spans 476 residues: MSYDERANAHPNLNDESDVEEEALVNDYREQVNFDDGMSELDRTTSLGAASQTQDLQAQLAAAATPLEYQATLETKFASYDNYCSLFHYILNSDGPVELEVPSYYWAWDVIDEFIYQFESFCRYRNRVARSGSNEEEAQLLRENPNTWGCYSVLNVLYSLIQKSQINEQLAAMKRGEDPAAFAGEYGSRPLYKMLGYFSIIGLLRVHCLLGDFTLALKTLDDIEMNKKAMFARVMAAHFTTYYYVGFSYMMTRRYGDAIRMFSHILVYVSRTKNFQKGGNSYDAIAKKNDQMYALIAICVALHPTRLDDTIHSALREKYGEQLHRLQQGGPEALPLFEELFRSACPKFISPTPPDFDNPALNVDPVDHHTAIFMDEVKNTLYNPTIRSYLKLYTTMDLQKLAGFLDVEPEKLRSWLLVNKQRSRQVRWVEGGLLEGETVSANDLDYALEKDLIHVSETKAGRRLVDWYLRNLARVY.

Positions 257–452 (DAIRMFSHIL…DLDYALEKDL (196 aa)) constitute a PCI domain.

Belongs to the eIF-3 subunit L family. In terms of assembly, component of the eukaryotic translation initiation factor 3 (eIF-3) complex.

It localises to the cytoplasm. In terms of biological role, component of the eukaryotic translation initiation factor 3 (eIF-3) complex, which is involved in protein synthesis of a specialized repertoire of mRNAs and, together with other initiation factors, stimulates binding of mRNA and methionyl-tRNAi to the 40S ribosome. The eIF-3 complex specifically targets and initiates translation of a subset of mRNAs involved in cell proliferation. The chain is Eukaryotic translation initiation factor 3 subunit L from Emericella nidulans (strain FGSC A4 / ATCC 38163 / CBS 112.46 / NRRL 194 / M139) (Aspergillus nidulans).